A 225-amino-acid chain; its full sequence is Cytidylate kinase (225 aa).

12-20 (GPSGAGKGT) is an ATP binding site.

The protein belongs to the cytidylate kinase family. Type 1 subfamily.

Its subcellular location is the cytoplasm. It carries out the reaction CMP + ATP = CDP + ADP. The enzyme catalyses dCMP + ATP = dCDP + ADP. This is Cytidylate kinase from Stenotrophomonas maltophilia (strain R551-3).